Consider the following 341-residue polypeptide: MRILGIETSCDETGIAVYDDEKGLLSHELYSQVKLHADYGGVVPELASRDHVRKIIPLIEKAMEDANTQPSDIDGVAFTQGPGLVGALLVGSSVGRSLAYAWNVPAVGVHHMEGHLLAPMLEDDAPAFPFIALLVSGGHSMLVKVEGIGQYEVLGESIDDAAGEAFDKTAKLLGLDYPGGPLLAKLAEKGEAGHYKFPRPMTDRPGLDFSFSGLKTFAANTIRDADLTGDNAEQIKANIAYAFQEAVVDTLIIKCKRALKQTGMKRLVIAGGVSANTMLRSEMKALMQALKGEVFYPSLAYCTDNGAMIAYAGMQRLKAGETLALSSQAKPRWPLDTLSAI.

The Fe cation site is built by histidine 111 and histidine 115. Residues 134–138 (LVSGG), aspartate 167, glycine 180, and asparagine 276 each bind substrate. A Fe cation-binding site is contributed by aspartate 304.

This sequence belongs to the KAE1 / TsaD family. It depends on Fe(2+) as a cofactor.

The protein localises to the cytoplasm. It catalyses the reaction L-threonylcarbamoyladenylate + adenosine(37) in tRNA = N(6)-L-threonylcarbamoyladenosine(37) in tRNA + AMP + H(+). In terms of biological role, required for the formation of a threonylcarbamoyl group on adenosine at position 37 (t(6)A37) in tRNAs that read codons beginning with adenine. Is involved in the transfer of the threonylcarbamoyl moiety of threonylcarbamoyl-AMP (TC-AMP) to the N6 group of A37, together with TsaE and TsaB. TsaD likely plays a direct catalytic role in this reaction. In Alteromonas mediterranea (strain DSM 17117 / CIP 110805 / LMG 28347 / Deep ecotype), this protein is tRNA N6-adenosine threonylcarbamoyltransferase.